A 67-amino-acid polypeptide reads, in one-letter code: V-type proton ATPase subunit e (67 aa).

Over 1-2 (MG) the chain is Lumenal. A helical transmembrane segment spans residues 3-23 (GLVVLLVGLLTALMSVVSYYV). The Cytoplasmic portion of the chain corresponds to 24-35 (SPKGNNTSTWQM). Residues 36-56 (SLILTFSCCYLLWAITYLAQL) traverse the membrane as a helical segment. Residues 57-67 (HPLEAPSRVLE) are Lumenal-facing.

Belongs to the V-ATPase e1/e2 subunit family. As to quaternary structure, V-ATPase is a heteromultimeric enzyme composed of a peripheral catalytic V1 complex (components A to H) attached to an integral membrane V0 proton pore complex (components: a, c, c', c'', d, e, f and VOA1).

Its subcellular location is the vacuole membrane. In terms of biological role, subunit of the V0 complex of vacuolar(H+)-ATPase (V-ATPase), a multisubunit enzyme composed of a peripheral complex (V1) that hydrolyzes ATP and a membrane integral complex (V0) that translocates protons. V-ATPase is responsible for acidifying and maintaining the pH of intracellular compartments. The protein is V-type proton ATPase subunit e (vma9) of Schizosaccharomyces pombe (strain 972 / ATCC 24843) (Fission yeast).